The sequence spans 67 residues: Phycobilisome 7.8 kDa linker polypeptide, allophycocyanin-associated, core (67 aa).

In terms of domain architecture, CpcD-like spans 1 to 56 (MRMFRITACLPSPSKIRTQRELQNTFFTKLVPYDAWFREQQRIQKLGGKIIKVELA).

The protein belongs to the phycobilisome linker protein family.

It localises to the cellular thylakoid membrane. Rod linker protein, associated with allophycocyanin. Linker polypeptides determine the state of aggregation and the location of the disk-shaped phycobiliprotein units within the phycobilisome and modulate their spectroscopic properties in order to mediate a directed and optimal energy transfer. The protein is Phycobilisome 7.8 kDa linker polypeptide, allophycocyanin-associated, core (apcC) of Synechococcus sp. (strain ATCC 27144 / PCC 6301 / SAUG 1402/1) (Anacystis nidulans).